The chain runs to 420 residues: L-rhamnose isomerase (420 aa).

Residues His-262, Asp-294, and Asp-296 each coordinate Mn(2+).

The protein belongs to the rhamnose isomerase family. As to quaternary structure, homotetramer. Mn(2+) serves as cofactor.

It is found in the cytoplasm. The enzyme catalyses L-rhamnopyranose = L-rhamnulose. It participates in carbohydrate degradation; L-rhamnose degradation; glycerone phosphate from L-rhamnose: step 1/3. Catalyzes the interconversion of L-rhamnose and L-rhamnulose. This is L-rhamnose isomerase from Pectobacterium atrosepticum (strain SCRI 1043 / ATCC BAA-672) (Erwinia carotovora subsp. atroseptica).